We begin with the raw amino-acid sequence, 338 residues long: Phosphoribosylformylglycinamidine cyclo-ligase (338 aa).

It belongs to the AIR synthase family.

Its subcellular location is the cytoplasm. The catalysed reaction is 2-formamido-N(1)-(5-O-phospho-beta-D-ribosyl)acetamidine + ATP = 5-amino-1-(5-phospho-beta-D-ribosyl)imidazole + ADP + phosphate + H(+). The protein operates within purine metabolism; IMP biosynthesis via de novo pathway; 5-amino-1-(5-phospho-D-ribosyl)imidazole from N(2)-formyl-N(1)-(5-phospho-D-ribosyl)glycinamide: step 2/2. The chain is Phosphoribosylformylglycinamidine cyclo-ligase from Thermoplasma acidophilum (strain ATCC 25905 / DSM 1728 / JCM 9062 / NBRC 15155 / AMRC-C165).